Here is a 266-residue protein sequence, read N- to C-terminus: Glucosamine-6-phosphate deaminase (266 aa).

The Proton acceptor; for enolization step role is filled by aspartate 67. Asparagine 139 serves as the catalytic For ring-opening step. Residue histidine 141 is the Proton acceptor; for ring-opening step of the active site. The active-site For ring-opening step is glutamate 146.

Belongs to the glucosamine/galactosamine-6-phosphate isomerase family. NagB subfamily. Homohexamer.

It carries out the reaction alpha-D-glucosamine 6-phosphate + H2O = beta-D-fructose 6-phosphate + NH4(+). It functions in the pathway amino-sugar metabolism; N-acetylneuraminate degradation; D-fructose 6-phosphate from N-acetylneuraminate: step 5/5. Its function is as follows. Catalyzes the reversible isomerization-deamination of glucosamine 6-phosphate (GlcN6P) to form fructose 6-phosphate (Fru6P) and ammonium ion. The protein is Glucosamine-6-phosphate deaminase of Marinomonas sp. (strain MWYL1).